A 276-amino-acid polypeptide reads, in one-letter code: ATP synthase subunit delta (276 aa).

Belongs to the ATPase delta chain family. As to quaternary structure, F-type ATPases have 2 components, F(1) - the catalytic core - and F(0) - the membrane proton channel. F(1) has five subunits: alpha(3), beta(3), gamma(1), delta(1), epsilon(1). F(0) has three main subunits: a(1), b(2) and c(10-14). The alpha and beta chains form an alternating ring which encloses part of the gamma chain. F(1) is attached to F(0) by a central stalk formed by the gamma and epsilon chains, while a peripheral stalk is formed by the delta and b chains.

The protein localises to the cell membrane. Its function is as follows. F(1)F(0) ATP synthase produces ATP from ADP in the presence of a proton or sodium gradient. F-type ATPases consist of two structural domains, F(1) containing the extramembraneous catalytic core and F(0) containing the membrane proton channel, linked together by a central stalk and a peripheral stalk. During catalysis, ATP synthesis in the catalytic domain of F(1) is coupled via a rotary mechanism of the central stalk subunits to proton translocation. In terms of biological role, this protein is part of the stalk that links CF(0) to CF(1). It either transmits conformational changes from CF(0) to CF(1) or is implicated in proton conduction. The protein is ATP synthase subunit delta of Kineococcus radiotolerans (strain ATCC BAA-149 / DSM 14245 / SRS30216).